Here is a 432-residue protein sequence, read N- to C-terminus: Malate dehydrogenase [NADP], chloroplastic (432 aa).

The transit peptide at 1-40 (MGLSTVYSPAGPRLVPAPLGRCRSAQPRRPRRAPLATVRC) directs the protein to the chloroplast. Positions 18 to 37 (PLGRCRSAQPRRPRRAPLAT) are disordered. Cysteines 67 and 72 form a disulfide. An NADP(+)-binding site is contributed by 96-102 (GAAGMIS). Substrate is bound by residues R177 and R183. N190 is a binding site for NADP(+). Q197 serves as a coordination point for NAD(+). 214 to 216 (VGN) serves as a coordination point for NADP(+). 2 residues coordinate substrate: N216 and R247. H272 (proton acceptor) is an active-site residue. A disulfide bridge links C408 with C420.

The protein belongs to the LDH/MDH superfamily. MDH type 2 family. In terms of assembly, homodimer.

Its subcellular location is the plastid. The protein resides in the chloroplast. The enzyme catalyses (S)-malate + NADP(+) = oxaloacetate + NADPH + H(+). Its activity is regulated as follows. Chloroplast NADP-MDH is activated upon illumination. In order to be enzymatically active, disulfide bridges on the protein must be reduced by thioredoxin which receives electrons from ferredoxin and the electron transport system of photosynthesis. In terms of biological role, the chloroplastic, NADP-dependent form is essential for the photosynthesis C4 cycle, which allows plants to circumvent the problem of photorespiration. In C4 plants, NADP-MDH activity acts to convert oxaloacetate to malate in chloroplasts of mesophyll cells for transport to the bundle sheath cells. The sequence is that of Malate dehydrogenase [NADP], chloroplastic from Zea mays (Maize).